The primary structure comprises 185 residues: MDELEDGALSNGDNLSLPSAGTESWPTSATPGLPPSLLSTLDPTHLGLPEQLASVTVPIRLDTLSYLLHSALLGTYNLQQSLPPCSCTAQPSHIWPDTVRRPPRRSGQARGGWEVRRRPSRGWGRGRGRGRVWAQSQRGPERAEERERNMAGEPGAGPSTPPVTPPSQDGQKEAGGLSEDWEADY.

2 disordered regions span residues 1–38 (MDEL…PSLL) and 93–185 (HIWP…EADY). Residues 11–25 (NGDNLSLPSAGTESW) are compositionally biased toward polar residues. Residues 26 to 38 (PTSATPGLPPSLL) show a composition bias toward low complexity. The span at 118–130 (RPSRGWGRGRGRG) shows a compositional bias: basic residues. Residues 139–150 (GPERAEERERNM) show a composition bias toward basic and acidic residues.

In terms of assembly, interacts with SPOCD1.

It localises to the nucleus. The protein localises to the nucleoplasm. Functionally, protein adapter involved in piRNA-directed transposon methylation by connecting PIWIL4-piRNA and DNA methylation machineries. The PIWIL4-piRNA pathway plays a central role during spermatogenesis by directing transposon DNA methylation and silencing, thereby preventing their mobilization, which is essential for the germline integrity. The polypeptide is piRNA-mediated silencing protein C19orf84 homolog (Mus musculus (Mouse)).